The primary structure comprises 363 residues: uncharacterized protein (363 aa).

Residues Arg-109 to Glu-329 are a coiled coil.

This is an uncharacterized protein from Homo sapiens (Human).